A 430-amino-acid polypeptide reads, in one-letter code: Alpha-(1-&gt;3)-arabinofuranosyltransferase (430 aa).

A run of 10 helical transmembrane segments spans residues 26-46, 114-134, 136-156, 160-180, 194-214, 218-238, 276-296, 307-327, 352-372, and 381-401; these read APSTATVLRSVLWPIAILSVI, WYISFNVLAFLIAAYLMLRIF, YTLSSVAAPALVLAMFCTESV, LVFTNINGCMLLGAVLFFRWL, AIGLTLVVKPSLAPLLLLPVL, FYTLITAFGVPLVFNIAAWPL, WLILLLRVVFLLLAVGSLWLL, FWLLTSSGVLLTASFLLLSLG, WPAWLAIYGFMTMDRWLLGHW, and YMKITYGWSLMLVVVFCVLYF.

This sequence belongs to the glycosyltransferase 87 family.

Its subcellular location is the cell membrane. It catalyses the reaction Adds an alpha-D-arabinofuranosyl group from trans,octacis-decaprenylphospho-beta-D-arabinofuranose at the 3-O-position of an alpha-(1-&gt;5)-arabinofuranan chain attached to a beta-(1-&gt;5)-galactofuranan chain.. The protein operates within cell wall biogenesis; cell wall polysaccharide biosynthesis. Its function is as follows. Involved in the biosynthesis of the arabinogalactan (AG) region of the mycolylarabinogalactan-peptidoglycan (mAGP) complex, an essential component of the mycobacterial cell wall. Catalyzes the addition of an arabinofuranosyl (Araf) residue from the sugar donor beta-D-arabinofuranosyl-1-monophosphoryldecaprenol (DPA) on the C-3 of an alpha-(1-&gt;5)-linked Araf from the arabinan backbone of AG. This chain is Alpha-(1-&gt;3)-arabinofuranosyltransferase (aftC), found in Mycolicibacterium smegmatis (strain ATCC 700084 / mc(2)155) (Mycobacterium smegmatis).